We begin with the raw amino-acid sequence, 199 residues long: Probable GTP-binding protein EngB (199 aa).

Positions 28–199 (DLPEIALAGR…DSWDAILEQV (172 aa)) constitute an EngB-type G domain. GTP contacts are provided by residues 36–43 (GRSNVGKS), 63–67 (GKTQL), 81–84 (DVPG), 148–151 (TKAD), and 180–182 (FSS). Ser43 and Thr65 together coordinate Mg(2+).

It belongs to the TRAFAC class TrmE-Era-EngA-EngB-Septin-like GTPase superfamily. EngB GTPase family. The cofactor is Mg(2+).

Its function is as follows. Necessary for normal cell division and for the maintenance of normal septation. The sequence is that of Probable GTP-binding protein EngB from Streptococcus pyogenes serotype M18 (strain MGAS8232).